A 144-amino-acid polypeptide reads, in one-letter code: Large ribosomal subunit protein uL15 (144 aa).

Residues 1–60 (MRLNSLRPAAGSRPDANRVGRGAGTGNGKTAGRGHKGQHSRSGGFTKVGFEGGQMPLQRR) are disordered. The span at 21 to 31 (RGAGTGNGKTA) shows a compositional bias: gly residues.

The protein belongs to the universal ribosomal protein uL15 family. As to quaternary structure, part of the 50S ribosomal subunit.

Binds to the 23S rRNA. In Alkalilimnicola ehrlichii (strain ATCC BAA-1101 / DSM 17681 / MLHE-1), this protein is Large ribosomal subunit protein uL15.